Consider the following 497-residue polypeptide: Zinc finger CCCH domain-containing protein 22 (497 aa).

Residues 136 to 163 (SESMMICKFFMQQRCRFGSSCRSSHGLD) form a C3H1-type zinc finger. A disordered region spans residues 236–281 (AQMTDDDGEEEEEEDEQQSASDSEDSVSSDYDEGSPQGIGFLESTN). Acidic residues predominate over residues 239–268 (TDDDGEEEEEEDEQQSASDSEDSVSSDYDE). In terms of domain architecture, G-patch spans 300–346 (TRGIASKMMASMGYREGMGLGVSGQGILNPILVKVLPAKRSLDYALE). Positions 352–387 (ECKSEKQKKKRSRGGKRKRGKKFAEAAKAAKQEEES) are disordered. A compositionally biased stretch (basic residues) spans 357–372 (KQKKKRSRGGKRKRGK). Basic and acidic residues predominate over residues 373–387 (KFAEAAKAAKQEEES).

This chain is Zinc finger CCCH domain-containing protein 22, found in Arabidopsis thaliana (Mouse-ear cress).